We begin with the raw amino-acid sequence, 228 residues long: Caspase recruitment domain-containing protein 19 (228 aa).

An intrachain disulfide couples cysteine 7 to cysteine 77. In terms of domain architecture, CARD spans 8–99 (DRLVQDTPFL…PLHSRLPSRH (92 aa)). Valine 113 is subject to Phosphoserine.

As to quaternary structure, associates with BCL10 by CARD-CARD interaction. Expressed in ovary, testis, placenta, skeletal muscle, kidney, lung, heart and liver (at protein level). Expressed in thymus and brain.

It localises to the nucleus. The protein resides in the endoplasmic reticulum membrane. It is found in the mitochondrion membrane. In terms of biological role, plays a role in inhibiting the effects of BCL10-induced activation of NF-kappa-B. May inhibit the phosphorylation of BCL10 in a CARD-dependent manner. The polypeptide is Caspase recruitment domain-containing protein 19 (CARD19) (Homo sapiens (Human)).